The primary structure comprises 221 residues: Elongation factor Ts (221 aa).

Residues 82–85 (TDFV) form an involved in Mg(2+) ion dislocation from EF-Tu region.

Belongs to the EF-Ts family.

The protein localises to the cytoplasm. Its function is as follows. Associates with the EF-Tu.GDP complex and induces the exchange of GDP to GTP. It remains bound to the aminoacyl-tRNA.EF-Tu.GTP complex up to the GTP hydrolysis stage on the ribosome. The chain is Elongation factor Ts from Synechococcus elongatus (strain ATCC 33912 / PCC 7942 / FACHB-805) (Anacystis nidulans R2).